We begin with the raw amino-acid sequence, 798 residues long: Cold shock domain-containing protein E1 (798 aa).

Residues 26–87 (ETGVIEKLLT…RTGKPIAIKL (62 aa)) form the CSD 1 domain. Lys81 carries the post-translational modification N6-acetyllysine. Lys91 participates in a covalent cross-link: Glycyl lysine isopeptide (Lys-Gly) (interchain with G-Cter in SUMO2). Ser123 carries the phosphoserine modification. The 44-residue stretch at 136–179 (VFYLTYTSEDVEGNVQLETGDKINFVIDNNKHTGAVSARNIMLL) folds into the CSD 2; truncated domain. Positions 186–245 (YQGVVCAMKEAFGFIERGDVVKEIFFHYSEFKGDLETLQPGDDVEFTIKDRNGKEVATDV) constitute a CSD 3 domain. The residue at position 276 (Ser276) is a Phosphoserine. The CSD 4; truncated domain occupies 297-337 (LPFGDKDTKSKVTLLEGDHVRFNISTDRRDKLERATNIEVL). 2 consecutive CSD domains span residues 349 to 410 (EMGV…AIRI) and 447 to 507 (NKGK…ATCV). Ser514 carries the phosphoserine modification. Residues 519 to 579 (LLGYVATLKD…KGNKVSAEKV (61 aa)) enclose the CSD 7 domain. At Ser584 the chain carries Phosphoserine. 2 CSD domains span residues 610-670 (PTQI…AYNI) and 674-735 (RRAT…ACNV). The SUZ-C domain maps to 748-789 (PRPDRLVNRLKNITLDDASAPRLMVLRQPRGPDNSMGFGAER). The residue at position 761 (Thr761) is a Phosphothreonine.

It belongs to the UNR family. Component of a multi subunit autoregulatory ribonucleoprotein complex (ARC), at least composed of IGF2BP1, PABPC1 and CSDE1. Interacts with STRAP. Part of a complex associated with the FOS mCRD domain and consisting of PABPC1, PAIP1, HNRPD and SYNCRIP. The interaction with PABPC1 is direct and RNA-independent. Interacts with EIF4ENIF1/4E-T.

It is found in the cytoplasm. The protein resides in the stress granule. Its subcellular location is the P-body. In terms of biological role, RNA-binding protein involved in translationally coupled mRNA turnover. Implicated with other RNA-binding proteins in the cytoplasmic deadenylation/translational and decay interplay of the FOS mRNA mediated by the major coding-region determinant of instability (mCRD) domain. Required for efficient formation of stress granules. The protein is Cold shock domain-containing protein E1 of Rattus norvegicus (Rat).